Consider the following 316-residue polypeptide: Olfactory receptor 5AP2 (316 aa).

Residues 1 to 34 (MRLMKEVRGRNQTEVTEFLLLGLSDNPDLQGVLF) lie on the Extracellular side of the membrane. An N-linked (GlcNAc...) asparagine glycan is attached at asparagine 11. Residues 35 to 55 (ALFLLIYMANMVGNLGMIVLI) form a helical membrane-spanning segment. Lysine 56 is a topological domain (cytoplasmic). A helical transmembrane segment spans residues 57–77 (IDLCLHTPMYFFLSSLSFVDA). Topologically, residues 78-104 (SYSSSVTPKMLVNLMAENKAISFHGCA) are extracellular. Cysteine 103 and cysteine 195 are joined by a disulfide. A helical transmembrane segment spans residues 105 to 125 (AQFYFFGSFLGTECFLLAMMA). Residues 126–135 (YDRYAAIWNP) are Cytoplasmic-facing. The helical transmembrane segment at 136–156 (LLYPVLVSGRICFLLIATSFL) threads the bilayer. The Extracellular portion of the chain corresponds to 157 to 210 (AGCGNAAIHTGMTFRLSFCGSNRINHFYCDTPPLLKLSCSDTHFNGIVIMAFSS). A helical transmembrane segment spans residues 211-231 (FIVISCVMIVLISYLCIFIAV). Topologically, residues 232 to 245 (LKMPSLEGRHKAFS) are cytoplasmic. Residues 246-266 (TCASYLMAVTIFFGTILFMYL) form a helical membrane-spanning segment. The Extracellular segment spans residues 267–278 (RPTSSYSMEQDK). The helical transmembrane segment at 279–299 (VVSVFYTVIIPVLNPLIYSLK) threads the bilayer. Topologically, residues 300 to 316 (NKDVKKALKKILWKHIL) are cytoplasmic.

Belongs to the G-protein coupled receptor 1 family.

The protein resides in the cell membrane. In terms of biological role, odorant receptor. The sequence is that of Olfactory receptor 5AP2 from Homo sapiens (Human).